A 238-amino-acid polypeptide reads, in one-letter code: Ribonuclease PH (238 aa).

Phosphate contacts are provided by residues arginine 86 and 124–126; that span reads GTR.

Belongs to the RNase PH family. As to quaternary structure, homohexameric ring arranged as a trimer of dimers.

The enzyme catalyses tRNA(n+1) + phosphate = tRNA(n) + a ribonucleoside 5'-diphosphate. In terms of biological role, phosphorolytic 3'-5' exoribonuclease that plays an important role in tRNA 3'-end maturation. Removes nucleotide residues following the 3'-CCA terminus of tRNAs; can also add nucleotides to the ends of RNA molecules by using nucleoside diphosphates as substrates, but this may not be physiologically important. Probably plays a role in initiation of 16S rRNA degradation (leading to ribosome degradation) during starvation. In Citrobacter koseri (strain ATCC BAA-895 / CDC 4225-83 / SGSC4696), this protein is Ribonuclease PH.